The sequence spans 246 residues: 3'(2'),5'-bisphosphate nucleotidase CysQ (246 aa).

Residues E64, D83, L85, D86, and D205 each contribute to the Mg(2+) site. Residue E64 coordinates substrate. Residues 85 to 88 (LDGT) and D205 contribute to the substrate site.

This sequence belongs to the inositol monophosphatase superfamily. CysQ family. The cofactor is Mg(2+).

It is found in the cell inner membrane. It carries out the reaction adenosine 3',5'-bisphosphate + H2O = AMP + phosphate. Functionally, converts adenosine-3',5'-bisphosphate (PAP) to AMP. The sequence is that of 3'(2'),5'-bisphosphate nucleotidase CysQ from Salmonella typhimurium (strain LT2 / SGSC1412 / ATCC 700720).